Here is a 190-residue protein sequence, read N- to C-terminus: Threonylcarbamoyl-AMP synthase (190 aa).

Residues 7 to 190 enclose the YrdC-like domain; it reads GDAIAAAIDV…ALTGELFRQG (184 aa).

This sequence belongs to the SUA5 family. TsaC subfamily.

The protein resides in the cytoplasm. The enzyme catalyses L-threonine + hydrogencarbonate + ATP = L-threonylcarbamoyladenylate + diphosphate + H2O. Its function is as follows. Required for the formation of a threonylcarbamoyl group on adenosine at position 37 (t(6)A37) in tRNAs that read codons beginning with adenine. Catalyzes the conversion of L-threonine, HCO(3)(-)/CO(2) and ATP to give threonylcarbamoyl-AMP (TC-AMP) as the acyladenylate intermediate, with the release of diphosphate. In Escherichia coli O157:H7, this protein is Threonylcarbamoyl-AMP synthase.